Consider the following 65-residue polypeptide: Small ribosomal subunit protein bS21 (65 aa).

It belongs to the bacterial ribosomal protein bS21 family.

The protein is Small ribosomal subunit protein bS21 of Flavobacterium psychrophilum (strain ATCC 49511 / DSM 21280 / CIP 103535 / JIP02/86).